Reading from the N-terminus, the 264-residue chain is Transcription initiation factor TFIID subunit 9 (264 aa).

The residue at position 5 (lysine 5) is an N6-acetyllysine. 4 positions are modified to phosphoserine: serine 149, serine 152, serine 155, and serine 158. The interval 150–174 (VGSVSSRPSTPTLGTPTPQAMSVST) is disordered. Positions 151–174 (GSVSSRPSTPTLGTPTPQAMSVST) are enriched in polar residues. 4 positions are modified to phosphothreonine: threonine 159, threonine 161, threonine 164, and threonine 178. Residues serine 181 and serine 196 each carry the phosphoserine modification. A disordered region spans residues 233 to 264 (QNTANESANALKRKREEEDDDDDDDDDDYDNL). Residues 249–264 (EEDDDDDDDDDDYDNL) show a composition bias toward acidic residues.

This sequence belongs to the TAF9 family. As to quaternary structure, component of the TFIID basal transcription factor complex, composed of TATA-box-binding protein TBP, and a number of TBP-associated factors (TAFs), including TAF1, TAF2, TAF3, TAF4, TAF5, TAF6, TAF7, TAF8, TAF9, TAF10, TAF11, TAF12 and TAF13. Component of the TATA-binding protein-free TAF complex (TFTC), the PCAF histone acetylase complex and the STAGA transcription coactivator-HAT complex. The PCAF complex consists at least of TADA2L/ADA2, SUPT3H/SPT3, TADA3L/ADA3, TAF5L/PAF65-beta, TAF6L/PAF65-alpha, TAF10/TAFII30, TAF12/TAFII20, TAF9/TAFII31 and TRRAP. The STAGA transcription coactivator-HAT complex consists at least of SUPT3H, GCN5L2, SUPT7L, TAF5L, TAF6L, TADA3L, TAD1L, TAF10, TAF12, TRRAP and TAF9. Binds N-terminal domain of p53/TP53 which is essential for transcription. Component of some MLL1/MLL complex, at least composed of the core components KMT2A/MLL1, ASH2L, HCFC1/HCF1, WDR5 and RBBP5, as well as the facultative components BACC1, CHD8, E2F6, HSP70, INO80C, KANSL1, LAS1L, MAX, MCRS1, MGA, MYST1/MOF, PELP1, PHF20, PRP31, RING2, RUVB1/TIP49A, RUVB2/TIP49B, SENP3, TAF1, TAF4, TAF6, TAF7, TAF9 and TEX10. Binds TFIIB and the Herpes simplex virus activator VP16. Forms a heterodimer with TAF6 in a complex with the TAF4B-TAF12 heterodimer. Also interacts with TAF5. Binds directly DNA. Increased DNA binding when complexed with TAF6.

The protein resides in the nucleus. In terms of biological role, the TFIID basal transcription factor complex plays a major role in the initiation of RNA polymerase II (Pol II)-dependent transcription. TFIID recognizes and binds promoters with or without a TATA box via its subunit TBP, a TATA-box-binding protein, and promotes assembly of the pre-initiation complex (PIC). The TFIID complex consists of TBP and TBP-associated factors (TAFs), including TAF1, TAF2, TAF3, TAF4, TAF5, TAF6, TAF7, TAF8, TAF9, TAF10, TAF11, TAF12 and TAF13. TAF9 is also a component of the TBP-free TAFII complex (TFTC), the PCAF histone acetylase complex and the STAGA transcription coactivator-HAT complex. TAF9 and its paralog TAF9B are involved in transcriptional activation as well as repression of distinct but overlapping sets of genes. Essential for cell viability. May have a role in gene regulation associated with apoptosis. The protein is Transcription initiation factor TFIID subunit 9 of Rattus norvegicus (Rat).